We begin with the raw amino-acid sequence, 657 residues long: Probable Xaa-Pro aminopeptidase P (657 aa).

Positions 453, 464, 562, and 576 each coordinate Mn(2+).

Belongs to the peptidase M24B family. Mn(2+) serves as cofactor.

It carries out the reaction Release of any N-terminal amino acid, including proline, that is linked to proline, even from a dipeptide or tripeptide.. Its function is as follows. Catalyzes the removal of a penultimate prolyl residue from the N-termini of peptides. In Talaromyces stipitatus (strain ATCC 10500 / CBS 375.48 / QM 6759 / NRRL 1006) (Penicillium stipitatum), this protein is Probable Xaa-Pro aminopeptidase P (ampp).